The following is a 92-amino-acid chain: Conotoxin Cal22f (92 aa).

Residues 1–24 form the signal peptide; the sequence is MMSTKGITLFLCLLLLALATSVNG. A propeptide spanning residues 25–44 is cleaved from the precursor; the sequence is GQGTRRSRMTRALHGGRPSA.

Contains 4 disulfide bonds. In terms of tissue distribution, expressed by the venom duct.

It is found in the secreted. Its function is as follows. Probable neurotoxin with unknown target. Possibly targets ion channels. The protein is Conotoxin Cal22f of Californiconus californicus (California cone).